Here is a 1088-residue protein sequence, read N- to C-terminus: RNA-directed RNA polymerase (1088 aa).

In terms of domain architecture, RdRp catalytic spans 501 to 687 (LSYGDVTRFL…AKRYIAGGKI (187 aa)).

It belongs to the reoviridae RNA-directed RNA polymerase family. In terms of assembly, interacts with VP3 (Potential). Interacts with VP2; this interaction activates VP1. Interacts with NSP5; this interaction is probably necessary for the formation of functional virus factories. Interacts with NSP2; this interaction is weak. Mg(2+) serves as cofactor.

It localises to the virion. The catalysed reaction is RNA(n) + a ribonucleoside 5'-triphosphate = RNA(n+1) + diphosphate. In terms of biological role, RNA-directed RNA polymerase that is involved in both transcription and genome replication. Together with VP3 capping enzyme, forms an enzyme complex positioned near the channels situated at each of the five-fold vertices of the core. Following infection, the outermost layer of the virus is lost, leaving a double-layered particle (DLP) made up of the core and VP6 shell. VP1 then catalyzes the transcription of fully conservative plus-strand genomic RNAs that are extruded through the DLP's channels into the cytoplasm where they function as mRNAs for translation of viral proteins. One copy of each of the viral (+)RNAs is also recruited during core assembly, together with newly synthesized polymerase complexes and VP2. The polymerase of these novo-formed particles catalyzes the synthesis of complementary minus-strands leading to dsRNA formation. To do so, the polymerase specifically recognizes and binds 4 bases 5'-UGUG-3' in the conserved 3'-sequence of plus-strand RNA templates. VP2 presumably activates the autoinhibited VP1-RNA complex to coordinate packaging and genome replication. Once dsRNA synthesis is complete, the polymerase switches to the transcriptional mode, thus providing secondary transcription. The sequence is that of RNA-directed RNA polymerase from Homo sapiens (Human).